Consider the following 322-residue polypeptide: uncharacterized protein (322 aa).

Basic residues-rich tracts occupy residues 1 to 16 (MPGNSRRRGAVRKSGT) and 43 to 61 (LRPHHPAAKRARAQPRRPV). Residues 1 to 69 (MPGNSRRRGA…PVKRADETET (69 aa)) are disordered. Positions 261, 281, and 290 each coordinate S-adenosyl-L-methionine.

The protein belongs to the class IV-like SAM-binding methyltransferase superfamily. RNA methyltransferase TrmH family.

This is an uncharacterized protein from Mycobacterium bovis (strain BCG / Pasteur 1173P2).